Consider the following 95-residue polypeptide: Large ribosomal subunit protein uL23 (95 aa).

The protein belongs to the universal ribosomal protein uL23 family. Part of the 50S ribosomal subunit. Contacts protein L29, and trigger factor when it is bound to the ribosome.

Its function is as follows. One of the early assembly proteins it binds 23S rRNA. One of the proteins that surrounds the polypeptide exit tunnel on the outside of the ribosome. Forms the main docking site for trigger factor binding to the ribosome. In Lawsonia intracellularis (strain PHE/MN1-00), this protein is Large ribosomal subunit protein uL23.